The sequence spans 308 residues: Elongation factor Ts (308 aa).

The segment at 80–83 (TDFV) is involved in Mg(2+) ion dislocation from EF-Tu.

It belongs to the EF-Ts family.

The protein resides in the cytoplasm. Functionally, associates with the EF-Tu.GDP complex and induces the exchange of GDP to GTP. It remains bound to the aminoacyl-tRNA.EF-Tu.GTP complex up to the GTP hydrolysis stage on the ribosome. The sequence is that of Elongation factor Ts from Parvibaculum lavamentivorans (strain DS-1 / DSM 13023 / NCIMB 13966).